Consider the following 72-residue polypeptide: uncharacterized protein (72 aa).

The Cytoplasmic portion of the chain corresponds to 1–12 (MSKHKHEWTESV). A helical membrane pass occupies residues 13 to 32 (ANSGPASILSYCASSILMTV). The Lumenal portion of the chain corresponds to 33 to 46 (TNKFVVNLDNFNMN). Residues 47 to 69 (FVMLFVQSLVCTVTLCILRIVGV) form a helical membrane-spanning segment. The Cytoplasmic segment spans residues 70–72 (ANF).

Belongs to the TPT transporter family. SLC35D subfamily.

It localises to the membrane. This is an uncharacterized protein from Saccharomyces cerevisiae (strain RM11-1a) (Baker's yeast).